A 362-amino-acid chain; its full sequence is Peptide chain release factor 1 (362 aa).

Q237 carries the N5-methylglutamine modification.

The protein belongs to the prokaryotic/mitochondrial release factor family. Methylated by PrmC. Methylation increases the termination efficiency of RF1.

It localises to the cytoplasm. Its function is as follows. Peptide chain release factor 1 directs the termination of translation in response to the peptide chain termination codons UAG and UAA. The chain is Peptide chain release factor 1 from Legionella pneumophila (strain Paris).